An 86-amino-acid polypeptide reads, in one-letter code: Electron transfer flavoprotein regulatory factor 1 (86 aa).

This sequence belongs to the complex I LYR family.

It localises to the mitochondrion. Its function is as follows. Acts as a regulator of the electron transfer flavoprotein by promoting the removal of flavin from the ETF holoenzyme (composed of ETFA and ETFB). The protein is Electron transfer flavoprotein regulatory factor 1 of Taeniopygia guttata (Zebra finch).